The following is a 169-amino-acid chain: Regulator of G-protein signaling rgs-2 (169 aa).

One can recognise an RGS domain in the interval 39–158; sequence GWSQSFENLM…FLASNIYKTV (120 aa).

Post-translationally, may be phosphorylated and activated by egl-4. As to expression, expressed in a subset of neurons including ventral cord and head- and tail-ganglia neurons. Also expressed in non-neuronal cells including pharyngeal and uterine muscles.

Its function is as follows. Weakly inhibits G protein signaling in nervous system, interacting preferentially with the G(O) subfamily member goa-1. In vitro, it acts as a GTPase activator of goa-1. Rgs-1 and rgs-2 redundantly adjust signaling when worms are fed to allow rapid induction of egg-laying behavior. Modulates chemotaxis responses by regulating negatively the sensitivity to quinine in ASH sensory neurons. This Caenorhabditis elegans protein is Regulator of G-protein signaling rgs-2 (rgs-2).